The chain runs to 172 residues: Scytalone dehydratase (172 aa).

Positions 30, 50, and 53 each coordinate substrate. Catalysis depends on residues H85 and H110. N131 contacts substrate.

This sequence belongs to the scytalone dehydratase family. In terms of assembly, homotrimer. Each subunit contains an active site, located in the central part of the hydrophobic core of the monomer, which functions independently.

It localises to the endosome. It carries out the reaction scytalone = 1,3,8-trihydroxynaphthalene + H2O. It functions in the pathway pigment biosynthesis; melanin biosynthesis. With respect to regulation, (N-phenoxypropyl)-carboxamides such as carpropamid and derivatives of norephedrine act as inhibitors of scytalone dehydratase activity. Scytalone dehydratase; part of the gene cluster that mediates the biosynthesis of dihydroxynaphthalene melanin, a bluish-green pigment and a structural component of the conidial wall. Within the pathway, catalyzes the dehydration of scytalone as well as of vermelone. Is also able to dehydrate the alternate substrate 2,3-dihydro-2,5-dihydroxy-4H-benzopyran-4-one (DDBO) to 5-hydroxy-4H-1-benzopyran-4-one (HBO). This is Scytalone dehydratase (SDH1) from Pyricularia oryzae (strain 70-15 / ATCC MYA-4617 / FGSC 8958) (Rice blast fungus).